The following is a 120-amino-acid chain: Ribonuclease P protein component 2 (120 aa).

It belongs to the eukaryotic/archaeal RNase P protein component 2 family. Consists of a catalytic RNA component and at least 4-5 protein subunits.

The protein resides in the cytoplasm. It carries out the reaction Endonucleolytic cleavage of RNA, removing 5'-extranucleotides from tRNA precursor.. Its function is as follows. Part of ribonuclease P, a protein complex that generates mature tRNA molecules by cleaving their 5'-ends. In Thermococcus kodakarensis (strain ATCC BAA-918 / JCM 12380 / KOD1) (Pyrococcus kodakaraensis (strain KOD1)), this protein is Ribonuclease P protein component 2.